Consider the following 83-residue polypeptide: Exodeoxyribonuclease 7 small subunit (83 aa).

Belongs to the XseB family. In terms of assembly, heterooligomer composed of large and small subunits.

It localises to the cytoplasm. The catalysed reaction is Exonucleolytic cleavage in either 5'- to 3'- or 3'- to 5'-direction to yield nucleoside 5'-phosphates.. Its function is as follows. Bidirectionally degrades single-stranded DNA into large acid-insoluble oligonucleotides, which are then degraded further into small acid-soluble oligonucleotides. In Bradyrhizobium sp. (strain BTAi1 / ATCC BAA-1182), this protein is Exodeoxyribonuclease 7 small subunit.